A 292-amino-acid polypeptide reads, in one-letter code: MSSRIIRATAANSSIRAFVANTTNLVEKARGFHQTSPVASAALGRTLTATSMMGVMLKGEKQKITTKINGGGPLGVILVVGDSEGNVKGYVGNPQVESTNIRPGKLDVGAAVGSDGEITVIKDLGMKKPYVGTAPLVSGEIGEDFATYFLNSEQQPSAVSLGVLIDIDYRIKASGGFIIQVLPNVQEAVLAKLESRIGQLESITVMMEQGMNEVDILNHVLEGMDPKIVETYEVDFECDCNVARFEKGLISIGRQEIREMIEEDENTELVCHFCNKKYHFNKEQLQGLLDEM.

Disulfide bonds link Cys238–Cys240 and Cys271–Cys274.

It belongs to the HSP33 family. Under oxidizing conditions two disulfide bonds are formed involving the reactive cysteines. Under reducing conditions zinc is bound to the reactive cysteines and the protein is inactive.

The protein resides in the cytoplasm. Functionally, redox regulated molecular chaperone. Protects both thermally unfolding and oxidatively damaged proteins from irreversible aggregation. Plays an important role in the bacterial defense system toward oxidative stress. The sequence is that of 33 kDa chaperonin from Alkaliphilus metalliredigens (strain QYMF).